We begin with the raw amino-acid sequence, 458 residues long: Exodeoxyribonuclease 7 large subunit (458 aa).

This sequence belongs to the XseA family. Heterooligomer composed of large and small subunits.

It is found in the cytoplasm. It catalyses the reaction Exonucleolytic cleavage in either 5'- to 3'- or 3'- to 5'-direction to yield nucleoside 5'-phosphates.. Its function is as follows. Bidirectionally degrades single-stranded DNA into large acid-insoluble oligonucleotides, which are then degraded further into small acid-soluble oligonucleotides. The sequence is that of Exodeoxyribonuclease 7 large subunit from Escherichia coli (strain UTI89 / UPEC).